A 701-amino-acid polypeptide reads, in one-letter code: Polyribonucleotide nucleotidyltransferase (701 aa).

The Mg(2+) site is built by D485 and D491. The KH domain occupies 552 to 611; the sequence is PKTQIMSINPDKIRDVIGAGGKVINKIIQDTGVKIDIKEDGTVFVSSTDHNGVNEAIKII. The S1 motif domain occupies 621–689; that stretch reads GEVYLGKVTK…NQGRINLSRK (69 aa).

This sequence belongs to the polyribonucleotide nucleotidyltransferase family. Requires Mg(2+) as cofactor.

Its subcellular location is the cytoplasm. The catalysed reaction is RNA(n+1) + phosphate = RNA(n) + a ribonucleoside 5'-diphosphate. Involved in mRNA degradation. Catalyzes the phosphorolysis of single-stranded polyribonucleotides processively in the 3'- to 5'-direction. The polypeptide is Polyribonucleotide nucleotidyltransferase (Clostridium beijerinckii (strain ATCC 51743 / NCIMB 8052) (Clostridium acetobutylicum)).